A 356-amino-acid polypeptide reads, in one-letter code: Uroporphyrinogen decarboxylase (356 aa).

Residues 25–29, Asp-75, Tyr-152, Thr-207, and His-326 contribute to the substrate site; that span reads RQAGR.

Belongs to the uroporphyrinogen decarboxylase family. As to quaternary structure, homodimer.

It localises to the cytoplasm. The enzyme catalyses uroporphyrinogen III + 4 H(+) = coproporphyrinogen III + 4 CO2. The protein operates within porphyrin-containing compound metabolism; protoporphyrin-IX biosynthesis; coproporphyrinogen-III from 5-aminolevulinate: step 4/4. Catalyzes the decarboxylation of four acetate groups of uroporphyrinogen-III to yield coproporphyrinogen-III. This Magnetococcus marinus (strain ATCC BAA-1437 / JCM 17883 / MC-1) protein is Uroporphyrinogen decarboxylase.